The chain runs to 301 residues: N-acetylmuramic acid 6-phosphate etherase (301 aa).

Positions 59 to 222 (TSEALMHGGR…STSVMVKLGK (164 aa)) constitute an SIS domain. Glu-87 serves as the catalytic Proton donor. Glu-118 is an active-site residue.

This sequence belongs to the GCKR-like family. MurNAc-6-P etherase subfamily. Homodimer.

It carries out the reaction N-acetyl-D-muramate 6-phosphate + H2O = N-acetyl-D-glucosamine 6-phosphate + (R)-lactate. It functions in the pathway amino-sugar metabolism; N-acetylmuramate degradation. Its function is as follows. Specifically catalyzes the cleavage of the D-lactyl ether substituent of MurNAc 6-phosphate, producing GlcNAc 6-phosphate and D-lactate. In Picosynechococcus sp. (strain ATCC 27264 / PCC 7002 / PR-6) (Agmenellum quadruplicatum), this protein is N-acetylmuramic acid 6-phosphate etherase.